The following is a 156-amino-acid chain: SsrA-binding protein (156 aa).

It belongs to the SmpB family.

The protein resides in the cytoplasm. In terms of biological role, required for rescue of stalled ribosomes mediated by trans-translation. Binds to transfer-messenger RNA (tmRNA), required for stable association of tmRNA with ribosomes. tmRNA and SmpB together mimic tRNA shape, replacing the anticodon stem-loop with SmpB. tmRNA is encoded by the ssrA gene; the 2 termini fold to resemble tRNA(Ala) and it encodes a 'tag peptide', a short internal open reading frame. During trans-translation Ala-aminoacylated tmRNA acts like a tRNA, entering the A-site of stalled ribosomes, displacing the stalled mRNA. The ribosome then switches to translate the ORF on the tmRNA; the nascent peptide is terminated with the 'tag peptide' encoded by the tmRNA and targeted for degradation. The ribosome is freed to recommence translation, which seems to be the essential function of trans-translation. This chain is SsrA-binding protein, found in Shouchella clausii (strain KSM-K16) (Alkalihalobacillus clausii).